The chain runs to 209 residues: Outer-membrane lipoprotein carrier protein (209 aa).

The signal sequence occupies residues 1 to 22; the sequence is MKKLLLTLAMVPAVLFSPTAWG.

Belongs to the LolA family. As to quaternary structure, monomer.

Its subcellular location is the periplasm. Functionally, participates in the translocation of lipoproteins from the inner membrane to the outer membrane. Only forms a complex with a lipoprotein if the residue after the N-terminal Cys is not an aspartate (The Asp acts as a targeting signal to indicate that the lipoprotein should stay in the inner membrane). The chain is Outer-membrane lipoprotein carrier protein from Alcanivorax borkumensis (strain ATCC 700651 / DSM 11573 / NCIMB 13689 / SK2).